We begin with the raw amino-acid sequence, 134 residues long: DNA-directed RNA polymerase subunit omega (134 aa).

Residues 77–108 (IDEPEPDPASLLAAGGNASASGDEEEDAPEAV) form a disordered region. The segment covering 85-97 (ASLLAAGGNASAS) has biased composition (low complexity).

Belongs to the RNA polymerase subunit omega family. The RNAP catalytic core consists of 2 alpha, 1 beta, 1 beta' and 1 omega subunit. When a sigma factor is associated with the core the holoenzyme is formed, which can initiate transcription.

It carries out the reaction RNA(n) + a ribonucleoside 5'-triphosphate = RNA(n+1) + diphosphate. Its function is as follows. Promotes RNA polymerase assembly. Latches the N- and C-terminal regions of the beta' subunit thereby facilitating its interaction with the beta and alpha subunits. The chain is DNA-directed RNA polymerase subunit omega from Rhizobium rhizogenes (strain K84 / ATCC BAA-868) (Agrobacterium radiobacter).